The following is a 477-amino-acid chain: Argininosuccinate lyase (477 aa).

Residues 1 to 18 (MTTSSHSSEQPTSTQTSG) are compositionally biased toward polar residues. The segment at 1-21 (MTTSSHSSEQPTSTQTSGMWG) is disordered.

This sequence belongs to the lyase 1 family. Argininosuccinate lyase subfamily.

The protein resides in the cytoplasm. It carries out the reaction 2-(N(omega)-L-arginino)succinate = fumarate + L-arginine. The protein operates within amino-acid biosynthesis; L-arginine biosynthesis; L-arginine from L-ornithine and carbamoyl phosphate: step 3/3. This chain is Argininosuccinate lyase, found in Acinetobacter baylyi (strain ATCC 33305 / BD413 / ADP1).